The chain runs to 148 residues: Large ribosomal subunit protein bL9 (148 aa).

This sequence belongs to the bacterial ribosomal protein bL9 family.

Functionally, binds to the 23S rRNA. This is Large ribosomal subunit protein bL9 from Geobacter sulfurreducens (strain ATCC 51573 / DSM 12127 / PCA).